The sequence spans 254 residues: MSISDNSREELGELPAGRPLQSEFNDDLDYPRLGSVTFRRGTLTENQQTMWNEKWPELGRVLEDELIDIDAWFGRTGAKTIVEIGSGTGTSTAAMAPLEADTNIIAVELYKPGLAKLMGAVVRGGIDNIRMVRGDGIEVLNRMFADGSLDGVRIFFPDPWPKARHNKRRIIQSGPLNLIAKKLKPGGVLHVATDHADYAEWINELVEVEPLLEYKGWPWPECPQLTDRQVITKFEGKGLDKDHTINEYLWQKKQ.

Residues 1 to 11 (MSISDNSREEL) show a composition bias toward basic and acidic residues. The segment at 1–25 (MSISDNSREELGELPAGRPLQSEFN) is disordered. S-adenosyl-L-methionine contacts are provided by glutamate 83, glutamate 108, aspartate 135, and aspartate 158. Aspartate 158 is an active-site residue. A substrate-binding site is contributed by lysine 162. Residues 164–169 (RHNKRR) are interaction with RNA. Substrate contacts are provided by residues aspartate 194 and 232 to 235 (TKFE).

Belongs to the class I-like SAM-binding methyltransferase superfamily. TrmB family.

The enzyme catalyses guanosine(46) in tRNA + S-adenosyl-L-methionine = N(7)-methylguanosine(46) in tRNA + S-adenosyl-L-homocysteine. It participates in tRNA modification; N(7)-methylguanine-tRNA biosynthesis. Functionally, catalyzes the formation of N(7)-methylguanine at position 46 (m7G46) in tRNA. The polypeptide is tRNA (guanine-N(7)-)-methyltransferase (Corynebacterium efficiens (strain DSM 44549 / YS-314 / AJ 12310 / JCM 11189 / NBRC 100395)).